A 101-amino-acid chain; its full sequence is Signal recognition particle 19 kDa protein (101 aa).

It belongs to the SRP19 family. In terms of assembly, part of the signal recognition particle protein translocation system, which is composed of SRP and FtsY. Archaeal SRP consists of a 7S RNA molecule of 300 nucleotides and two protein subunits: SRP54 and SRP19.

The protein localises to the cytoplasm. Its function is as follows. Involved in targeting and insertion of nascent membrane proteins into the cytoplasmic membrane. Binds directly to 7S RNA and mediates binding of the 54 kDa subunit of the SRP. This chain is Signal recognition particle 19 kDa protein, found in Methanosarcina acetivorans (strain ATCC 35395 / DSM 2834 / JCM 12185 / C2A).